We begin with the raw amino-acid sequence, 212 residues long: Inactive ribonuclease-like protein 10 (212 aa).

The first 24 residues, 1 to 24 (MKVTLVHLLFMMLLLLLGLGVGLG), serve as a signal peptide directing secretion. N-linked (GlcNAc...) asparagine glycosylation is found at Asn-129 and Asn-204.

It belongs to the pancreatic ribonuclease family. The N-terminus is blocked. Glycosylated. As to expression, male-specific expression in proximal caput of the epididymis.

It localises to the secreted. Secreted proximal epididymal protein required for post-testicular sperm maturation and male fertility. May be involved in sperm adhesion to the egg zona pellucida. Does not have ribonuclease activity. This chain is Inactive ribonuclease-like protein 10 (Rnase10), found in Rattus norvegicus (Rat).